Consider the following 387-residue polypeptide: Protein WHAT'S THIS FACTOR 9, mitochondrial (387 aa).

The transit peptide at 1–24 directs the protein to the mitochondrion; sequence MLSIRRHAKTVASSCTNLTQKRTY. Residues 32–358 enclose the PORR domain; sequence KRDPYFDNIE…KKYIQLMKNS (327 aa).

It is found in the mitochondrion. Functionally, RNA-binding protein involved in group II intron splicing. Binds specific group II introns and promotes their splicing (e.g. rpl2 and ccmFC). This chain is Protein WHAT'S THIS FACTOR 9, mitochondrial, found in Arabidopsis thaliana (Mouse-ear cress).